The primary structure comprises 125 residues: Small ribosomal subunit protein uS12c (125 aa).

The protein belongs to the universal ribosomal protein uS12 family. In terms of assembly, part of the 30S ribosomal subunit.

The protein localises to the plastid. It is found in the chloroplast. With S4 and S5 plays an important role in translational accuracy. Located at the interface of the 30S and 50S subunits. The polypeptide is Small ribosomal subunit protein uS12c (rps12) (Tupiella akineta (Green alga)).